The chain runs to 117 residues: Conotoxin vil14.3 (117 aa).

Positions 1-22 (MGFRVLVLVVMATTSALPFTFS) are cleaved as a signal peptide. The propeptide occupies 23-90 (EEPGRSPFRP…FAELSVGQRR (68 aa)). A disordered region spans residues 53–79 (RADGQPPDMRQPEMRRPEMRRPEVRQP). Basic and acidic residues predominate over residues 62–79 (RQPEMRRPEMRRPEVRQP). 2 disulfides stabilise this stretch: cysteine 96–cysteine 116 and cysteine 100–cysteine 112.

It belongs to the conotoxin R superfamily. Expressed by the venom duct.

The protein resides in the secreted. The polypeptide is Conotoxin vil14.3 (Conus villepinii (Villepin's cone)).